The chain runs to 498 residues: ATP synthase subunit beta, chloroplastic (498 aa).

ATP is bound at residue 172–179 (GGAGVGKT).

The protein belongs to the ATPase alpha/beta chains family. F-type ATPases have 2 components, CF(1) - the catalytic core - and CF(0) - the membrane proton channel. CF(1) has five subunits: alpha(3), beta(3), gamma(1), delta(1), epsilon(1). CF(0) has four main subunits: a(1), b(1), b'(1) and c(9-12).

It is found in the plastid. It localises to the chloroplast thylakoid membrane. The enzyme catalyses ATP + H2O + 4 H(+)(in) = ADP + phosphate + 5 H(+)(out). In terms of biological role, produces ATP from ADP in the presence of a proton gradient across the membrane. The catalytic sites are hosted primarily by the beta subunits. In Morus indica (Mulberry), this protein is ATP synthase subunit beta, chloroplastic.